The sequence spans 21 residues: 78 kDa dihydrolipoyllysine-residue acetyltransferase component of pyruvate dehydrogenase complex (21 aa).

This sequence belongs to the 2-oxoacid dehydrogenase family. Forms a 60-polypeptide structural core. (R)-lipoate serves as cofactor.

It is found in the mitochondrion matrix. The enzyme catalyses N(6)-[(R)-dihydrolipoyl]-L-lysyl-[protein] + acetyl-CoA = N(6)-[(R)-S(8)-acetyldihydrolipoyl]-L-lysyl-[protein] + CoA. Functionally, the pyruvate dehydrogenase complex catalyzes the overall conversion of pyruvate to acetyl-CoA and CO(2). It contains multiple copies of three enzymatic components: pyruvate dehydrogenase (E1), dihydrolipoamide acetyltransferase (E2) and lipoamide dehydrogenase (E3). In Solanum tuberosum (Potato), this protein is 78 kDa dihydrolipoyllysine-residue acetyltransferase component of pyruvate dehydrogenase complex.